The following is a 303-amino-acid chain: Acetylglutamate kinase (303 aa).

Residues 73–74, arginine 95, and asparagine 194 each bind substrate; that span reads GG.

The protein belongs to the acetylglutamate kinase family. ArgB subfamily.

The protein resides in the cytoplasm. It catalyses the reaction N-acetyl-L-glutamate + ATP = N-acetyl-L-glutamyl 5-phosphate + ADP. It participates in amino-acid biosynthesis; L-arginine biosynthesis; N(2)-acetyl-L-ornithine from L-glutamate: step 2/4. Catalyzes the ATP-dependent phosphorylation of N-acetyl-L-glutamate. In Saccharopolyspora erythraea (strain ATCC 11635 / DSM 40517 / JCM 4748 / NBRC 13426 / NCIMB 8594 / NRRL 2338), this protein is Acetylglutamate kinase.